We begin with the raw amino-acid sequence, 707 residues long: Nucleolin 2 (707 aa).

The interval 1–446 (MGKSSKKSAV…TPASNQNQAT (446 aa)) is disordered. 2 stretches are compositionally biased toward basic and acidic residues: residues 30 to 40 (RNAEDEIEKAV) and 47 to 60 (TVRE…EEAK). Composition is skewed to acidic residues over residues 75–85 (SSEEDSSESEE), 108–120 (SSDD…SSDD), and 144–153 (DSSDESLSDD). The segment covering 158 to 170 (KPAAPLKKPVALA) has biased composition (low complexity). 3 stretches are compositionally biased toward acidic residues: residues 219-232 (DSSD…SDED), 248-263 (SESS…DDEA), and 271-287 (ESSD…SDSD). The span at 300–311 (LTKDTKKGQSKD) shows a compositional bias: basic and acidic residues. Over residues 312 to 326 (ESEDSSDESSEESGD) the composition is skewed to acidic residues. A compositionally biased stretch (low complexity) spans 336–347 (STTSGTTKPSPK). Residues 355–370 (SDDESDEDDSSDESSD) show a composition bias toward acidic residues. A compositionally biased stretch (low complexity) spans 376–394 (KQTQAKKQAPVAQESSSSD). A compositionally biased stretch (acidic residues) spans 395–406 (ESSEEDSDMESD). Residues 407–417 (EPAKTPQKKET) are compositionally biased toward basic and acidic residues. Residues 420 to 429 (SVGSNKSATK) are compositionally biased toward polar residues. The RRM 1 domain maps to 449 to 525 (KTLFVGNLPY…RPVRLDLARE (77 aa)). 2 disordered regions span residues 527–546 (GAYT…PAQS) and 629–707 (RPRP…GDDD). In terms of domain architecture, RRM 2 spans 549 to 630 (NTIFIKGFDT…YSLYVDEARP (82 aa)). The segment covering 657–681 (GRGDGSRGRGDRGRGRGFGRGDRGH) has biased composition (basic and acidic residues).

It is found in the nucleus. The protein localises to the nucleolus. In terms of biological role, involved in pre-rRNA processing and ribosome assembly. The polypeptide is Nucleolin 2 (Oryza sativa subsp. japonica (Rice)).